The following is a 708-amino-acid chain: RUN and FYVE domain-containing protein 1 (708 aa).

Positions 1–17 are enriched in basic and acidic residues; sequence MADREGGCAAGRGRELE. Positions 1–57 are disordered; sequence MADREGGCAAGRGRELEPELEPGPGPGSALEPGEEFEIVDRSQLPGPGDLRSATRPR. An RUN domain is found at 139-271; the sequence is DADHAPLQQF…LDANLCLKGE (133 aa). Residues 321–374 are a coiled coil; it reads TVGDLQTKIDGLEKTNSKLQEELSAATDRICSLQEEQQQLREQNELIRERSEKS. Phosphotyrosine is present on residues Tyr389 and Tyr400. The stretch at 405–617 forms a coiled coil; it reads KQLKEEKKVR…QALQEMGLHL (213 aa). The segment at 493–522 is disordered; sequence QVMSSMKQMEERLQHSERARQGAEERSHKL. A compositionally biased stretch (basic and acidic residues) spans 500–522; that stretch reads QMEERLQHSERARQGAEERSHKL. Positions 615-625 are interaction with RAB4; it reads LHLSQSKLKME. Ser620 bears the Phosphoserine mark. Residues 642–700 form an FYVE-type zinc finger; that stretch reads DDEATHCRQCEKEFSISRRKHHCRNCGHIFCNTCSSNELALPSYPKPVRVCDSCHTLLL. Positions 648, 651, 664, 667, 672, 675, 692, and 695 each coordinate Zn(2+).

As to quaternary structure, self-assembles through coiled coil domains to drive ELVA (endo-lysosomal vesicular assembly) formation. Interacts with BMX. May interact with SSB. Interacts with RAB4 and RAB5 that have been activated by GTP-binding. Interacts WITH RAB14 and RAB4B (GTP-bound form); the interactions allow endosomal tethering and fusion. Interacts with ARL8B (GTP-bound form); the interaction is required for RUFY1 endosomal location and promotes interaction with RAB14. Phosphorylation on Tyr-389 and/or Tyr-400 is required for interaction with BMX and endosomal targeting. In terms of tissue distribution, broadly expressed, with highest levels in lung, testis, kidney and brain.

It is found in the early endosome membrane. Its function is as follows. Activating adapter involved in cargo sorting from early/recycling endosomes. Regulates retrieval of proteins from endosomes to the trans-Golgi network through interaction with the dynein-dynactin complex. Dual effector of RAB4B and RAB14, mediates a cooperative interaction allowing endosomal tethering and fusion. Binds phospholipid vesicles containing phosphatidylinositol 3-phosphate and participates in early endosomal trafficking. In oocytes, self-assembles to form a protein matrix which hold together endolysosomes, autophagosomes and proteasomes and generate non-membrane-bound compartments called endo-lysosomal vesicular assemblies (ELVAs). In immature oocytes, ELVAs sequester ubiquitinated protein aggregates and degrade them upon oocyte maturation. The protein is RUN and FYVE domain-containing protein 1 of Homo sapiens (Human).